Consider the following 187-residue polypeptide: Putative lipoprotein LppJ (187 aa).

Positions methionine 1–glycine 28 are cleaved as a signal peptide. Cysteine 29 is lipidated: N-palmitoyl cysteine. Cysteine 29 carries the S-diacylglycerol cysteine lipid modification.

Its subcellular location is the cell membrane. The sequence is that of Putative lipoprotein LppJ (lppJ) from Mycobacterium bovis (strain ATCC BAA-935 / AF2122/97).